The following is a 1105-amino-acid chain: Protein phosphatase 1 regulatory subunit 26 (1105 aa).

4 disordered regions span residues 228–382, 444–468, 504–526, and 589–748; these read LNDK…NKLA, QSTY…DSLV, TSPE…AKAM, and LNRG…DSDD. Basic and acidic residues predominate over residues 275–285; the sequence is LLRKHASDSKL. Positions 306–317 are enriched in low complexity; that stretch reads TKTSSPSPKSTP. Residues 359–368 show a composition bias toward polar residues; that stretch reads SPTSANSLTH. Residues 451–460 are compositionally biased toward pro residues; the sequence is TEPPPPPPEP. Over residues 504-516 the composition is skewed to polar residues; it reads TSPELGSQSSKLS. Residues 602 to 612 are compositionally biased toward low complexity; it reads SYSSGDKSSSL. The segment covering 628–647 has biased composition (basic residues); sequence SKRKYKKRPKDGKSQCKKRV. Over residues 686–701 the composition is skewed to basic and acidic residues; sequence NSLEKSKKRREEKAVE. Polar residues predominate over residues 705–715; it reads PSCSSSPQGNK. Residues 733-742 are compositionally biased toward basic and acidic residues; it reads RALDDAHESS.

Its subcellular location is the nucleus. The protein localises to the nucleolus. Its function is as follows. May inhibit phosphatase activity of protein phosphatase 1 (PP1) complexes. May positively regulate cell proliferation. This chain is Protein phosphatase 1 regulatory subunit 26 (ppp1r26), found in Xenopus laevis (African clawed frog).